Reading from the N-terminus, the 314-residue chain is Olfactory receptor 11H7 (314 aa).

Residues 1–24 (MNNSQISTVTQFVLLGFPGPWKIQ) lie on the Extracellular side of the membrane. N2 carries an N-linked (GlcNAc...) asparagine glycan. A helical transmembrane segment spans residues 25–45 (IIFFSMILLVYIFTLTGNMAI). The Cytoplasmic segment spans residues 46-57 (ICAVRWDHRLHT). Residues 58–78 (PMYVLLANFSFLEIWYVTCTV) form a helical membrane-spanning segment. Topologically, residues 79–97 (PNMLVNFFSKTKTISFSGC) are extracellular. C97 and C179 form a disulfide bridge. A helical membrane pass occupies residues 98 to 118 (FTQFHFFFSLGTTECFFLCVM). Residues 119 to 142 (AYDRYLAICHPLHYPSIMTGQLCG) are Cytoplasmic-facing. Residues 143–163 (ILVSLCWLIGFLGHSISIFFI) form a helical membrane-spanning segment. At 164-201 (FQLPFCGPNIIDHFLCDVDPLMALSSAPTHIIGHVFHS) the chain is on the extracellular side. The chain crosses the membrane as a helical span at residues 202–222 (VSSLFINLTMVYILGSYTLVL). Residues 223–244 (RTVLQVPSSAGWQKAISTCGSH) lie on the Cytoplasmic side of the membrane. Residues 245–265 (LVVVSLFYGAIMLMYVSPTPG) traverse the membrane as a helical segment. Over 266–271 (NSVAMH) the chain is Extracellular. A helical transmembrane segment spans residues 272–292 (KLITLIYSVVTPVLNPLIYSL). Topologically, residues 293-314 (RNKDMKYALHHVFCGMRIIQRS) are cytoplasmic.

It belongs to the G-protein coupled receptor 1 family.

It is found in the cell membrane. Functionally, odorant receptor. Activated by isovaleric acid. This is Olfactory receptor 11H7 (OR11H7) from Homo sapiens (Human).